The following is a 263-amino-acid chain: Phosphatidylserine decarboxylase proenzyme (263 aa).

Active-site charge relay system; for autoendoproteolytic cleavage activity residues include Asp90, His146, and Ser230. The Schiff-base intermediate with substrate; via pyruvic acid; for decarboxylase activity role is filled by Ser230. Ser230 is modified (pyruvic acid (Ser); by autocatalysis).

The protein belongs to the phosphatidylserine decarboxylase family. PSD-B subfamily. Prokaryotic type I sub-subfamily. As to quaternary structure, heterodimer of a large membrane-associated beta subunit and a small pyruvoyl-containing alpha subunit. The cofactor is pyruvate. Is synthesized initially as an inactive proenzyme. Formation of the active enzyme involves a self-maturation process in which the active site pyruvoyl group is generated from an internal serine residue via an autocatalytic post-translational modification. Two non-identical subunits are generated from the proenzyme in this reaction, and the pyruvate is formed at the N-terminus of the alpha chain, which is derived from the carboxyl end of the proenzyme. The autoendoproteolytic cleavage occurs by a canonical serine protease mechanism, in which the side chain hydroxyl group of the serine supplies its oxygen atom to form the C-terminus of the beta chain, while the remainder of the serine residue undergoes an oxidative deamination to produce ammonia and the pyruvoyl prosthetic group on the alpha chain. During this reaction, the Ser that is part of the protease active site of the proenzyme becomes the pyruvoyl prosthetic group, which constitutes an essential element of the active site of the mature decarboxylase.

It localises to the cell membrane. It carries out the reaction a 1,2-diacyl-sn-glycero-3-phospho-L-serine + H(+) = a 1,2-diacyl-sn-glycero-3-phosphoethanolamine + CO2. It functions in the pathway phospholipid metabolism; phosphatidylethanolamine biosynthesis; phosphatidylethanolamine from CDP-diacylglycerol: step 2/2. In terms of biological role, catalyzes the formation of phosphatidylethanolamine (PtdEtn) from phosphatidylserine (PtdSer). The polypeptide is Phosphatidylserine decarboxylase proenzyme (Bacillus subtilis (strain 168)).